The primary structure comprises 743 residues: Dystrobrevin alpha (743 aa).

The segment at 1–288 (MIEDSGKRGN…SHSNQHQMKE (288 aa)) is interaction with MAGEE1. Residues 238-294 (FHPVECSYCHSESMMGFRYRCQQCHNYQLCQDCFWRGHAGGSHSNQHQMKEYTSWKS) form a ZZ-type zinc finger. Zn(2+) is bound by residues Cys-243, Cys-246, Cys-258, Cys-261, Cys-267, Cys-270, His-280, and His-284. Positions 400 to 450 (DRLADEHVLIGLYVNMLRNNPSCMLESSNRLDEEHRLIARYAARLAAESSS) are syntrophin-binding region. A coiled-coil region spans residues 461-556 (DISFTIDANK…EGLMKLLKTQ (96 aa)). A disordered region spans residues 556 to 575 (QGAGSPRSSPSHTISRPIPM). Over residues 557-569 (GAGSPRSSPSHTI) the composition is skewed to polar residues. Ser-662 is modified (phosphoserine).

The protein belongs to the dystrophin family. Dystrobrevin subfamily. As to quaternary structure, interacts with dystrophin, utrophin and the syntrophins SNTA1, SNTB1, SNTB2, SNTG1 and SNTG2. Interacts with MAGEE1. Binds dystrobrevin binding protein 1. Interacts with CTNNAL1. The interaction is required for correct localization of both CTNNAL1 and DTNA. Does not interact with dystrophin. Post-translationally, phosphorylation of DTN-1 on tyrosine kinase substrate domain present in the C-terminus. In terms of tissue distribution, highly expressed in brain, skeletal and cardiac muscles, and expressed at lower levels in lung, liver and pancreas. Isoform 2 is not expressed in cardiac muscle. Isoform 7 and isoform 8 are only expressed in muscle.

Its subcellular location is the cytoplasm. The protein localises to the synapse. It localises to the cell membrane. May be involved in the formation and stability of synapses as well as being involved in the clustering of nicotinic acetylcholine receptors. In Homo sapiens (Human), this protein is Dystrobrevin alpha.